The following is a 401-amino-acid chain: Probable 2,3-bisphosphoglycerate-independent phosphoglycerate mutase (401 aa).

This sequence belongs to the BPG-independent phosphoglycerate mutase family. A-PGAM subfamily.

It catalyses the reaction (2R)-2-phosphoglycerate = (2R)-3-phosphoglycerate. It participates in carbohydrate degradation; glycolysis; pyruvate from D-glyceraldehyde 3-phosphate: step 3/5. Catalyzes the interconversion of 2-phosphoglycerate and 3-phosphoglycerate. The protein is Probable 2,3-bisphosphoglycerate-independent phosphoglycerate mutase of Thermotoga sp. (strain RQ2).